The primary structure comprises 67 residues: Large ribosomal subunit protein bL35 (67 aa).

Belongs to the bacterial ribosomal protein bL35 family.

This Acidovorax ebreus (strain TPSY) (Diaphorobacter sp. (strain TPSY)) protein is Large ribosomal subunit protein bL35.